We begin with the raw amino-acid sequence, 82 residues long: U1-theraphotoxin-Ct1b (82 aa).

Positions 1–23 (MRTFTLIAILTCALLVIYHAAEA) are cleaved as a signal peptide. Positions 24–44 (EELEAKDVIESKALATLDEER) are excised as a propeptide.

Belongs to the neurotoxin 12 (Hwtx-2) family. 03 (juruin) subfamily. In terms of processing, contains 3 disulfide bonds. Two different connectivities are observed in similar proteins (C1-C3, C2-C5, C4-C6 or C1-C4, C2-C5, C3-C6). Expressed by the venom gland.

It is found in the secreted. Functionally, this toxin causes paralysis and death to sheep blowflies. It does not target insect sodium channels. This chain is U1-theraphotoxin-Ct1b, found in Coremiocnemis tropix (Australian tarantula spider).